The following is a 285-amino-acid chain: Polyamine aminopropyltransferase (285 aa).

The 237-residue stretch at 5-241 folds into the PABS domain; it reads DSWFTEHFQA…GWWSVTLSSK (237 aa). An S-methyl-5'-thioadenosine-binding site is contributed by Gln-35. Spermidine contacts are provided by His-66 and Asp-90. S-methyl-5'-thioadenosine-binding positions include Asp-110 and 141 to 142; that span reads DG. The Proton acceptor role is filled by Asp-160. Position 160–163 (160–163) interacts with spermidine; it reads DSTD. Pro-167 lines the S-methyl-5'-thioadenosine pocket.

It belongs to the spermidine/spermine synthase family. Homodimer or homotetramer.

It localises to the cytoplasm. It carries out the reaction S-adenosyl 3-(methylsulfanyl)propylamine + putrescine = S-methyl-5'-thioadenosine + spermidine + H(+). It participates in amine and polyamine biosynthesis; spermidine biosynthesis; spermidine from putrescine: step 1/1. Functionally, catalyzes the irreversible transfer of a propylamine group from the amino donor S-adenosylmethioninamine (decarboxy-AdoMet) to putrescine (1,4-diaminobutane) to yield spermidine. The protein is Polyamine aminopropyltransferase of Xylella fastidiosa (strain 9a5c).